Here is a 288-residue protein sequence, read N- to C-terminus: Glycine--tRNA ligase alpha subunit (288 aa).

It belongs to the class-II aminoacyl-tRNA synthetase family. As to quaternary structure, tetramer of two alpha and two beta subunits.

Its subcellular location is the cytoplasm. The enzyme catalyses tRNA(Gly) + glycine + ATP = glycyl-tRNA(Gly) + AMP + diphosphate. In Rickettsia africae (strain ESF-5), this protein is Glycine--tRNA ligase alpha subunit.